A 243-amino-acid chain; its full sequence is DNA repair protein RecO (243 aa).

Belongs to the RecO family.

Involved in DNA repair and RecF pathway recombination. The polypeptide is DNA repair protein RecO (Serratia proteamaculans (strain 568)).